Consider the following 109-residue polypeptide: MNTIIPLLLLSLLITVYAYALEDGNKEEIQDIAESEFEASNEMLQLAHLLEADRAETEEDRNSRQKRCWGANVPCEDENSPCCSPLKCEKTFGYGWWYGSPFCVRSGSG.

The N-terminal stretch at 1-18 (MNTIIPLLLLSLLITVYA) is a signal peptide. A propeptide spanning residues 19-67 (YALEDGNKEEIQDIAESEFEASNEMLQLAHLLEADRAETEEDRNSRQKR) is cleaved from the precursor. Intrachain disulfides connect Cys-68-Cys-83, Cys-75-Cys-88, and Cys-82-Cys-103.

The protein belongs to the neurotoxin 14 (magi-1) family. 07 (Jztx-56) subfamily. Expressed by the venom gland.

The protein localises to the secreted. In terms of biological role, probable ion channel inhibitor. The polypeptide is U26-theraphotoxin-Cg1a (Chilobrachys guangxiensis (Chinese earth tiger tarantula)).